We begin with the raw amino-acid sequence, 240 residues long: UDP-2,3-diacylglucosamine hydrolase (240 aa).

Positions 8, 10, 41, 79, and 114 each coordinate Mn(2+). 79–80 (NR) contributes to the substrate binding site. Substrate is bound by residues D122, S160, N164, K167, and H195. H195 and H197 together coordinate Mn(2+).

Belongs to the LpxH family. Requires Mn(2+) as cofactor.

Its subcellular location is the cell inner membrane. The protein localises to the cytoplasm. The catalysed reaction is UDP-2-N,3-O-bis[(3R)-3-hydroxytetradecanoyl]-alpha-D-glucosamine + H2O = 2-N,3-O-bis[(3R)-3-hydroxytetradecanoyl]-alpha-D-glucosaminyl 1-phosphate + UMP + 2 H(+). It functions in the pathway glycolipid biosynthesis; lipid IV(A) biosynthesis; lipid IV(A) from (3R)-3-hydroxytetradecanoyl-[acyl-carrier-protein] and UDP-N-acetyl-alpha-D-glucosamine: step 4/6. Inhibited by a sulfonyl piperazine compound that shows antibacterial activity against E.coli; LpxH is the cellular target of this compound. Inhibited by 0.01% (or more) Triton X-100 in vitro. In terms of biological role, hydrolyzes the pyrophosphate bond of UDP-2,3-diacylglucosamine to yield 2,3-diacylglucosamine 1-phosphate (lipid X) and UMP by catalyzing the attack of water at the alpha-P atom. Involved in the biosynthesis of lipid A, a phosphorylated glycolipid that anchors the lipopolysaccharide to the outer membrane of the cell. Is essential for E.coli growth. Does not cleave the unacylated UDP-GlcNAc, the mono-acylated UDP-3-O-(R)-3-hydroxymyristoyl-GlcNAc, and CDP-diacylglycerol. The sequence is that of UDP-2,3-diacylglucosamine hydrolase from Escherichia coli (strain K12).